The primary structure comprises 377 residues: uncharacterized protein (377 aa).

Transmembrane regions (helical) follow at residues 26–46 (TFQN…VVAI), 67–87 (TVGS…WVII), 108–128 (FLTF…ISLT), and 135–155 (IDYG…ALYI).

The protein localises to the cell membrane. This is an uncharacterized protein from Methanocaldococcus jannaschii (strain ATCC 43067 / DSM 2661 / JAL-1 / JCM 10045 / NBRC 100440) (Methanococcus jannaschii).